The following is a 331-amino-acid chain: Adenosine deaminase (331 aa).

Zn(2+)-binding residues include H12 and H14. Substrate contacts are provided by H14, D16, and G170. Position 197 (H197) interacts with Zn(2+). The active-site Proton donor is the E200. A Zn(2+)-binding site is contributed by D278. D279 serves as a coordination point for substrate.

This sequence belongs to the metallo-dependent hydrolases superfamily. Adenosine and AMP deaminases family. Adenosine deaminase subfamily. It depends on Zn(2+) as a cofactor.

The enzyme catalyses adenosine + H2O + H(+) = inosine + NH4(+). It carries out the reaction 2'-deoxyadenosine + H2O + H(+) = 2'-deoxyinosine + NH4(+). Catalyzes the hydrolytic deamination of adenosine and 2-deoxyadenosine. This is Adenosine deaminase from Shewanella baltica (strain OS155 / ATCC BAA-1091).